We begin with the raw amino-acid sequence, 431 residues long: Pyroglutamylated RF-amide peptide receptor (431 aa).

The Extracellular portion of the chain corresponds to 1–46 (MQALNITPEQFSRLLRDHNLTREQFIALYRLRPLVYTPELPGRAKL). N-linked (GlcNAc...) asparagine glycosylation is present at Asn19. A helical membrane pass occupies residues 47–67 (ALVLTGVLIFALALFGNALVF). Residues 68–81 (YVVTRSKAMRTVTN) lie on the Cytoplasmic side of the membrane. The chain crosses the membrane as a helical span at residues 82–102 (IFICSLALSDLLITFFCIPVT). The Extracellular segment spans residues 103–120 (MLQNISDNWLGGAFICKM). The helical transmembrane segment at 121–141 (VPFVQSTAVVTEILTMTCIAV) threads the bilayer. Over 142-162 (ERHQGLVHPFKMKWQYTNRRA) the chain is Cytoplasmic. Residues 163-183 (FTMLGVVWLVAVIVGSPMWHV) form a helical membrane-spanning segment. Topologically, residues 184–212 (QQLEIKYDFLYEKEHICCLEEWTSPVHQK) are extracellular. The chain crosses the membrane as a helical span at residues 213–233 (IYTTFILVILFLLPLMVMLIL). At 234–271 (YSKIGYELWIKKRVGDGSVLRTIHGKEMSKIARKKKRA) the chain is on the cytoplasmic side. A helical membrane pass occupies residues 272-292 (VIMMVTVVALFAVCWAPFHVV). The Extracellular portion of the chain corresponds to 293–311 (HMMIEYSNFEKEYDDVTIK). Residues 312–332 (MIFAIVQIIGFSNSICNPIVY) traverse the membrane as a helical segment. The Cytoplasmic portion of the chain corresponds to 333-431 (AFMNENFKKN…AENSPLDSGH (99 aa)).

The protein belongs to the G-protein coupled receptor 1 family. As to expression, expressed widely in the brain with high levels in the hypothalamus, trigeminal ganglia and vestibular neurons, and moderate levels in the amygdala, cortex, pituitary, hippocampus, thalamus, caudate nucleus and medulla oblongata. In peripheral tissues, expressed at high levels in the retina and at moderate levels in the heart, kidney, testis and thyroid.

The protein resides in the cell membrane. Its function is as follows. Receptor for the orexigenic neuropeptide QRFP. The activity of this receptor is mediated by G proteins that modulate adenylate cyclase activity and intracellular calcium levels. The chain is Pyroglutamylated RF-amide peptide receptor (QRFPR) from Homo sapiens (Human).